The following is a 122-amino-acid chain: Large ribosomal subunit protein bL19 (122 aa).

This sequence belongs to the bacterial ribosomal protein bL19 family.

This protein is located at the 30S-50S ribosomal subunit interface and may play a role in the structure and function of the aminoacyl-tRNA binding site. The chain is Large ribosomal subunit protein bL19 from Chlamydia felis (strain Fe/C-56) (Chlamydophila felis).